Reading from the N-terminus, the 257-residue chain is Phosphonates import ATP-binding protein PhnC (257 aa).

The ABC transporter domain occupies 4 to 248; the sequence is IEFKDVRKVY…AFNEIYGRSI (245 aa). Residue 37 to 44 participates in ATP binding; it reads GLSGSGKS.

The protein belongs to the ABC transporter superfamily. Phosphonates importer (TC 3.A.1.9.1) family. The complex is composed of two ATP-binding proteins (PhnC), two transmembrane proteins (PhnE) and a solute-binding protein (PhnD).

It localises to the cell membrane. It catalyses the reaction phosphonate(out) + ATP + H2O = phosphonate(in) + ADP + phosphate + H(+). Part of the ABC transporter complex PhnCDE involved in phosphonates import. Responsible for energy coupling to the transport system. The protein is Phosphonates import ATP-binding protein PhnC of Staphylococcus saprophyticus subsp. saprophyticus (strain ATCC 15305 / DSM 20229 / NCIMB 8711 / NCTC 7292 / S-41).